A 142-amino-acid polypeptide reads, in one-letter code: Augurin-A (142 aa).

An N-terminal signal peptide occupies residues 1 to 28 (MLSEKFHLRLLTLLTLLTALSLTDVASE). 2 consecutive propeptides follow at residues 29 to 66 (SKLEKLLMKRVDRDVKPAAAVAVSPSKAKEFLTSLKRP) and 127 to 142 (GAASYRHGANVNYDYY).

The protein belongs to the augurin family.

It is found in the secreted. It localises to the cytoplasm. The protein resides in the apical cell membrane. Its function is as follows. Probable hormone. Required for the proper formation of the central nervous system by attenuating cell proliferation during development. The polypeptide is Augurin-A (Danio rerio (Zebrafish)).